Reading from the N-terminus, the 211-residue chain is Dual specificity protein phosphatase 26 (211 aa).

The Tyrosine-protein phosphatase domain maps to N60–Q207. C152 serves as the catalytic Phosphocysteine intermediate.

It belongs to the protein-tyrosine phosphatase family. Non-receptor class dual specificity subfamily. In terms of assembly, interacts with HSF4.

It localises to the cytoplasm. The protein resides in the nucleus. Its subcellular location is the golgi apparatus. The catalysed reaction is O-phospho-L-tyrosyl-[protein] + H2O = L-tyrosyl-[protein] + phosphate. It catalyses the reaction O-phospho-L-seryl-[protein] + H2O = L-seryl-[protein] + phosphate. The enzyme catalyses O-phospho-L-threonyl-[protein] + H2O = L-threonyl-[protein] + phosphate. In terms of biological role, inactivates MAPK1 and MAPK3 which leads to dephosphorylation of heat shock factor protein 4 and a reduction in its DNA-binding activity. This chain is Dual specificity protein phosphatase 26 (DUSP26), found in Pongo abelii (Sumatran orangutan).